Reading from the N-terminus, the 221-residue chain is Adenylate kinase (221 aa).

Residue 10–15 (GAGKGT) participates in ATP binding. Positions 30 to 59 (STGDMLRAAVKAGTPLGVEAKKVMDAGGLV) are NMP. AMP contacts are provided by residues Thr-31, Arg-36, 57 to 59 (GLV), 85 to 88 (GFPR), and Gln-92. An LID region spans residues 122–159 (GRRVHVASGRTYHLKYNPPKTEGVDDETGEPLIQRDDD). ATP contacts are provided by residues Arg-123 and 132–133 (TY). Positions 138-159 (NPPKTEGVDDETGEPLIQRDDD) are disordered. AMP contacts are provided by Arg-156 and Arg-167. Gly-207 provides a ligand contact to ATP.

Belongs to the adenylate kinase family. Monomer.

It localises to the cytoplasm. The enzyme catalyses AMP + ATP = 2 ADP. It participates in purine metabolism; AMP biosynthesis via salvage pathway; AMP from ADP: step 1/1. Catalyzes the reversible transfer of the terminal phosphate group between ATP and AMP. Plays an important role in cellular energy homeostasis and in adenine nucleotide metabolism. This chain is Adenylate kinase, found in Cupriavidus taiwanensis (strain DSM 17343 / BCRC 17206 / CCUG 44338 / CIP 107171 / LMG 19424 / R1) (Ralstonia taiwanensis (strain LMG 19424)).